Here is a 635-residue protein sequence, read N- to C-terminus: Threonine--tRNA ligase (635 aa).

In terms of domain architecture, TGS spans 1–58; the sequence is MIRVICNNETVELPKGATAADFASKIKNSHYFAGVVINDQIKDLSTTLNEGDTLRFVT. A catalytic region spans residues 237-528; sequence DHRVLGAKLD…LIEHFKGKFP (292 aa). Residues cysteine 328, histidine 379, and histidine 505 each coordinate Zn(2+).

This sequence belongs to the class-II aminoacyl-tRNA synthetase family. In terms of assembly, homodimer. Zn(2+) serves as cofactor.

It is found in the cytoplasm. The enzyme catalyses tRNA(Thr) + L-threonine + ATP = L-threonyl-tRNA(Thr) + AMP + diphosphate + H(+). Its function is as follows. Catalyzes the attachment of threonine to tRNA(Thr) in a two-step reaction: L-threonine is first activated by ATP to form Thr-AMP and then transferred to the acceptor end of tRNA(Thr). Also edits incorrectly charged L-seryl-tRNA(Thr). This is Threonine--tRNA ligase from Chlamydia caviae (strain ATCC VR-813 / DSM 19441 / 03DC25 / GPIC) (Chlamydophila caviae).